The sequence spans 107 residues: Anti-adapter protein IraM (107 aa).

This sequence belongs to the IraM/RssC family.

The protein resides in the cytoplasm. Functionally, inhibits RpoS proteolysis by regulating RssB activity, thereby increasing the stability of the sigma stress factor RpoS during magnesium starvation. The protein is Anti-adapter protein IraM of Escherichia coli O7:K1 (strain IAI39 / ExPEC).